Consider the following 130-residue polypeptide: Cytochrome c-type biogenesis protein CcmE (130 aa).

Topologically, residues 1–7 are cytoplasmic; the sequence is MKKKHKR. A helical; Signal-anchor for type II membrane protein transmembrane segment spans residues 8–28; it reads LLITSGIFCFLSCAVFFILTT. Topologically, residues 29-130 are extracellular; sequence LKENISFFYT…DENYKPKVLK (102 aa). 2 residues coordinate heme: His120 and Tyr124.

This sequence belongs to the CcmE/CycJ family.

Its subcellular location is the cell membrane. Functionally, heme chaperone required for the biogenesis of c-type cytochromes. Transiently binds heme delivered by CcmC and transfers the heme to apo-cytochromes in a process facilitated by CcmF and CcmH. The sequence is that of Cytochrome c-type biogenesis protein CcmE from Wolbachia pipientis subsp. Culex pipiens (strain wPip).